The primary structure comprises 853 residues: DNA mismatch repair protein MutS (853 aa).

An ATP-binding site is contributed by G614 to S621.

This sequence belongs to the DNA mismatch repair MutS family.

Functionally, this protein is involved in the repair of mismatches in DNA. It is possible that it carries out the mismatch recognition step. This protein has a weak ATPase activity. The protein is DNA mismatch repair protein MutS of Escherichia coli O127:H6 (strain E2348/69 / EPEC).